A 535-amino-acid chain; its full sequence is Transmembrane protein 151 homolog (535 aa).

3 consecutive transmembrane segments (helical) span residues 27–47 (GYGK…YATY), 73–93 (YNFV…MECW), and 254–274 (PWFL…SWPL). The tract at residues 498-535 (ASISHSSSKDLKSLTLKNNNGAANNNNNNNNENPEEQP) is disordered. The segment covering 510–529 (SLTLKNNNGAANNNNNNNNE) has biased composition (low complexity).

This sequence belongs to the TMEM151 family.

It is found in the membrane. This is Transmembrane protein 151 homolog from Caenorhabditis briggsae.